We begin with the raw amino-acid sequence, 504 residues long: AMP phosphorylase 1 (504 aa).

AMP is bound by residues G169, 195–200 (SRAITS), and T204. The Proton donor role is filled by D257. The AMP site is built by S265 and K289.

The protein belongs to the thymidine/pyrimidine-nucleoside phosphorylase family. Type 2 subfamily.

The enzyme catalyses AMP + phosphate = alpha-D-ribose 1,5-bisphosphate + adenine. It catalyses the reaction CMP + phosphate = cytosine + alpha-D-ribose 1,5-bisphosphate. The catalysed reaction is UMP + phosphate = alpha-D-ribose 1,5-bisphosphate + uracil. In terms of biological role, catalyzes the conversion of AMP and phosphate to adenine and ribose 1,5-bisphosphate (R15P). Exhibits phosphorylase activity toward CMP and UMP in addition to AMP. Functions in an archaeal AMP degradation pathway, together with R15P isomerase and RubisCO. This is AMP phosphorylase 1 from Archaeoglobus fulgidus (strain ATCC 49558 / DSM 4304 / JCM 9628 / NBRC 100126 / VC-16).